A 411-amino-acid polypeptide reads, in one-letter code: Citrate synthase (411 aa).

Active-site residues include histidine 304 and aspartate 363.

It belongs to the citrate synthase family.

The enzyme catalyses oxaloacetate + acetyl-CoA + H2O = citrate + CoA + H(+). The protein operates within carbohydrate metabolism; tricarboxylic acid cycle; isocitrate from oxaloacetate: step 1/2. The polypeptide is Citrate synthase (gltA) (Rickettsia massiliae).